Reading from the N-terminus, the 306-residue chain is MNPPADDMPARCHSYLQQFEAYMQSERQLSAHTVRNYLYELQRGRELLPEGIDLLNVGREHWQQVLAKLHRKGLSPRSLSLWLSAVKQWGEFLLRAGAIELNPAKGLSAPKQAKPLPKNIDVDSLTHLLEIDGNDPLTLRDKAIMELFYSSGLRLAELAALDLSSVQYDQREVRVLGKGNKERIVPVGRYAIDAISAWLECRRQIPCEDNALFVTEKGKRLSHRSIQARMSKWGQEQALSMRVHPHKLRHSFATHMLESSADLRAVQELLGHENLSTTQIYTSLDFQHLAKVYDNAHPRAKKQQDK.

The Core-binding (CB) domain maps to 10–94 (ARCHSYLQQF…AVKQWGEFLL (85 aa)). The Tyr recombinase domain maps to 115–294 (PLPKNIDVDS…DFQHLAKVYD (180 aa)). Active-site residues include Arg-154, Lys-178, His-246, Arg-249, and His-272. Tyr-281 (O-(3'-phospho-DNA)-tyrosine intermediate) is an active-site residue.

The protein belongs to the 'phage' integrase family. XerC subfamily. Forms a cyclic heterotetrameric complex composed of two molecules of XerC and two molecules of XerD.

It localises to the cytoplasm. Site-specific tyrosine recombinase, which acts by catalyzing the cutting and rejoining of the recombining DNA molecules. The XerC-XerD complex is essential to convert dimers of the bacterial chromosome into monomers to permit their segregation at cell division. It also contributes to the segregational stability of plasmids. This chain is Tyrosine recombinase XerC, found in Shewanella oneidensis (strain ATCC 700550 / JCM 31522 / CIP 106686 / LMG 19005 / NCIMB 14063 / MR-1).